The primary structure comprises 431 residues: Histidinol dehydrogenase (431 aa).

NAD(+) is bound by residues Tyr127, Gln185, and Asn208. Residues Ser234, Gln256, and His259 each contribute to the substrate site. Residues Gln256 and His259 each contribute to the Zn(2+) site. Residues Glu323 and His324 each act as proton acceptor in the active site. The substrate site is built by His324, Asp357, Glu411, and His416. Asp357 lines the Zn(2+) pocket. Position 416 (His416) interacts with Zn(2+).

It belongs to the histidinol dehydrogenase family. Zn(2+) serves as cofactor.

The enzyme catalyses L-histidinol + 2 NAD(+) + H2O = L-histidine + 2 NADH + 3 H(+). The protein operates within amino-acid biosynthesis; L-histidine biosynthesis; L-histidine from 5-phospho-alpha-D-ribose 1-diphosphate: step 9/9. Catalyzes the sequential NAD-dependent oxidations of L-histidinol to L-histidinaldehyde and then to L-histidine. This Vibrio parahaemolyticus serotype O3:K6 (strain RIMD 2210633) protein is Histidinol dehydrogenase.